Consider the following 515-residue polypeptide: RNA-splicing ligase RtcB homolog (515 aa).

The Mn(2+) site is built by Asp-121, Cys-124, His-229, His-269, and His-363. 228-232 contacts GMP; the sequence is NHYGE. GMP is bound by residues 363–364, 412–415, Ser-419, 438–441, and Lys-514; these read HN, GGTM, and HGSG. Residue His-438 is the GMP-histidine intermediate of the active site.

The protein belongs to the RtcB family. Catalytic component of the tRNA-splicing ligase complex. Mn(2+) serves as cofactor.

It catalyses the reaction a 3'-end 3'-phospho-ribonucleotide-RNA + a 5'-end dephospho-ribonucleoside-RNA + GTP = a ribonucleotidyl-ribonucleotide-RNA + GMP + diphosphate. The enzyme catalyses a 3'-end 2',3'-cyclophospho-ribonucleotide-RNA + a 5'-end dephospho-ribonucleoside-RNA + GTP + H2O = a ribonucleotidyl-ribonucleotide-RNA + GMP + diphosphate + H(+). Its function is as follows. Catalytic subunit of the tRNA-splicing ligase complex that acts by directly joining spliced tRNA halves to mature-sized tRNAs by incorporating the precursor-derived splice junction phosphate into the mature tRNA as a canonical 3',5'-phosphodiester. May act as an RNA ligase with broad substrate specificity, and may function toward other RNAs. This Theileria annulata protein is RNA-splicing ligase RtcB homolog.